The following is a 128-amino-acid chain: Glycine cleavage system H protein (128 aa).

The region spanning 24–106 (VYSVGITEHA…YTDGWLFSIK (83 aa)) is the Lipoyl-binding domain. The residue at position 65 (lysine 65) is an N6-lipoyllysine.

It belongs to the GcvH family. In terms of assembly, the glycine cleavage system is composed of four proteins: P, T, L and H. It depends on (R)-lipoate as a cofactor.

Its function is as follows. The glycine cleavage system catalyzes the degradation of glycine. The H protein shuttles the methylamine group of glycine from the P protein to the T protein. This is Glycine cleavage system H protein from Yersinia enterocolitica serotype O:8 / biotype 1B (strain NCTC 13174 / 8081).